We begin with the raw amino-acid sequence, 796 residues long: MASKSDKQVTVEVNNNGRNRSKSRARSQSRGRGRSVKITVNSHNKGRRQNGRNKYQSNQRVRKIVNKQLRKQGVTGPKPAICQRATATLGTIGTNTTGATEIEACILLNPVLVKDATGSTQFGPVQALGAQYSMWKLKYLNVKLTSMVGASAVNGTVLRISLNPTSTPSSTSWSGLGARKHMDVTVGRNAVFKLRPSDLGGPRDGWWLTNTNDNASDTLGPSIEIHTLGKTMSSYKNEQFTGGLFLVELASEWCFTGYAANPNLVNLVKSTDHEVNVTFEGSKGTPLIMNVAEHSHFARMAEQHSSISTTFSRAGGDATSDTVWQVLNTAVSAAELVAPPPFNWLIKGGWWFVKLIAGRTRTGTKQFYVYPSYQDALSNKPALCTGGVTGGVLRTTPVTTLQFTQMNQPSLGHGEHTATIGSIVQDPSGELRVLLTVGSIMSPNSADRQVWLNKTLTAPGTNSNDNLVKIAHDLGHYLIMQGFMHIKTVEWYTPDFQPSRDPTPIAGMSVMVNITKKADVYFMKQFKNSYTNNRHQITSIFLIKPLADFKVQCYMSYFKRESHDNDGVANLTVRSMTSPETIRFQVGEWYLLTSTTLKENNLPEGWVWDRVELKSDTPYYADQALTYFITPPPVDSQILFEGNTTLPRISSPPDNPSGRYMESHQQDCDSSDDEDDCENVSEETETEDEEDEDEDDEADRFDLHSPYSSEPEDSDENNRVTLLSTLINQGMTVERATRITKRAFPTCAEKLKRSVYMDLLASGASPSSAWSNACDEARNVGSNQLAKLSGDRGHAE.

Residues 1 to 59 (MASKSDKQVTVEVNNNGRNRSKSRARSQSRGRGRSVKITVNSHNKGRRQNGRNKYQSNQ) are disordered. The interval 1 to 70 (MASKSDKQVT…VRKIVNKQLR (70 aa)) is basic. Residues 19-35 (NRSKSRARSQSRGRGRS) are compositionally biased toward basic residues. The segment at 71–263 (KQGVTGPKPA…CFTGYAANPN (193 aa)) is inner core. The tract at residues 274 to 313 (EVNVTFEGSKGTPLIMNVAEHSHFARMAEQHSSISTTFSR) is lipid disruption activity. The tract at residues 395-422 (TTPVTTLQFTQMNQPSLGHGEHTATIGS) is core attachment. Positions 423–650 (IVQDPSGELR…EGNTTLPRIS (228 aa)) are P2 globular domain. The segment at 644–718 (TTLPRISSPP…SEPEDSDENN (75 aa)) is disordered. Positions 651 to 796 (SPPDNPSGRY…KLSGDRGHAE (146 aa)) are acidic. Residues 669–699 (DSSDDEDDCENVSEETETEDEEDEDEDDEAD) show a composition bias toward acidic residues.

As to quaternary structure, heterodimer with spike protein VP27. The spikes form a globular dimer with 30 spikes covering the mature virion. Spike protein VP25 that lacks the core attachment region may need to dimerize with spike protein VP27 to remain stably bound to the viral particle. Does not interact with host PDIA4 during virus entry as it is the case for other strains. Heterodimer with spike protein VP25. The spikes form a globular dimer with 30 spikes covering the mature virion. Spike protein VP25 that lacks the core attachment region may need to dimerize with spike protein VP27 to remain stably bound to the viral particle. Specific enzymatic cleavages by the host yield mature proteins. VP90 acidic C-terminal domain is eliminated from the immature virion by host caspases during viral maturation giving rise to virions composed of VP70. The virus can then dissociate from cellular membranes and exit the cell. Further cleavages by host extracellular proteases occur resulting in the three structural proteins VP34, VP27 and VP25 and conferring infectivity.

It localises to the virion. The protein localises to the host extracellular space. Its function is as follows. The capsid polyprotein VP90 self-assembles and undergoes a proteolytic cleavage by host caspases to yield the immature VP70 virion. Functionally, the immature virion is composed of 180 VP70 subunits with 90 dimeric spikes and displays a T=3 icosahedral symmetry. During maturation, VP70 undergoes a loss of 60 peripentonal spikes, which likely plays an important role in viral infectivity. In terms of biological role, self-assembles to form an icosahedral capsid with a T=3 symmetry, about 43 nm in diameter. This forms contains only 30 spikes located on the icosahedral 2-fold axes. VP25 and VP27 Forms the spikes at the surface of the virion. This forms contains only 30 spikes located on the icosahedral 2-fold axes. Plays a role in the attachment to target host cell. This attachment induces virion internalization through clathrin-dependent endocytosis. Its function is as follows. VP25 and VP27 Forms the spikes at the surface of the virion. This forms contains only 30 spikes located on the icosahedral 2-fold axes. Plays a role in the attachment to target host cell. This attachment induces virion internalization through clathrin-dependent endocytosis. In Human astrovirus-2 (HAstV-2), this protein is Capsid polyprotein VP90.